We begin with the raw amino-acid sequence, 1033 residues long: Isoleucine--tRNA ligase (1033 aa).

The 'HIGH' region motif lies at 47-57 (PTANGLPHVGH). Positions 590 to 594 (KMSKS) match the 'KMSKS' region motif. Lysine 593 serves as a coordination point for ATP.

This sequence belongs to the class-I aminoacyl-tRNA synthetase family. IleS type 2 subfamily. In terms of assembly, monomer. Zn(2+) serves as cofactor.

Its subcellular location is the cytoplasm. The catalysed reaction is tRNA(Ile) + L-isoleucine + ATP = L-isoleucyl-tRNA(Ile) + AMP + diphosphate. Catalyzes the attachment of isoleucine to tRNA(Ile). As IleRS can inadvertently accommodate and process structurally similar amino acids such as valine, to avoid such errors it has two additional distinct tRNA(Ile)-dependent editing activities. One activity is designated as 'pretransfer' editing and involves the hydrolysis of activated Val-AMP. The other activity is designated 'posttransfer' editing and involves deacylation of mischarged Val-tRNA(Ile). The chain is Isoleucine--tRNA ligase from Bacillus thuringiensis (strain Al Hakam).